The following is a 478-amino-acid chain: Transcript termination protein A18 (478 aa).

The region spanning 98–254 (KVELKRPMYV…NDVINVSNSS (157 aa)) is the Helicase ATP-binding domain. Residue 111–118 (LACGFGKT) participates in ATP binding. The short motif at 204–207 (DESH) is the DESH box element. Positions 307 to 454 (ILDTIIYDFE…IITLAIEKLG (148 aa)) constitute a Helicase C-terminal domain.

It belongs to the helicase family. Poxviruses subfamily. In terms of assembly, interacts with G2. Might be part of a transcription complex composed at least of G2, A18, and H5.

It is found in the virion. DNA helicase which seems to act as a postreplicative transcription termination factor. Involved in ATP-dependent release of nascent RNA. Forms a stable complex with single-stranded DNA, and to a lesser extent RNA. The protein is Transcript termination protein A18 of Erythrocebus patas (Red guenon).